The chain runs to 205 residues: Holliday junction branch migration complex subunit RuvA (205 aa).

Positions 1–64 (MIGKLKGVVD…EDMIRLYGFR (64 aa)) are domain I. The interval 65 to 143 (SDAEREWFRL…AFAPVDPALV (79 aa)) is domain II. The flexible linker stretch occupies residues 144 to 152 (ALAGAVEEG). Positions 153-205 (AAPQPVADAVSALVNLGYPQVQAAAAIAAALKGAGEGAEAKVLIRLGLRELAR) are domain III.

The protein belongs to the RuvA family. Homotetramer. Forms an RuvA(8)-RuvB(12)-Holliday junction (HJ) complex. HJ DNA is sandwiched between 2 RuvA tetramers; dsDNA enters through RuvA and exits via RuvB. An RuvB hexamer assembles on each DNA strand where it exits the tetramer. Each RuvB hexamer is contacted by two RuvA subunits (via domain III) on 2 adjacent RuvB subunits; this complex drives branch migration. In the full resolvosome a probable DNA-RuvA(4)-RuvB(12)-RuvC(2) complex forms which resolves the HJ.

It localises to the cytoplasm. In terms of biological role, the RuvA-RuvB-RuvC complex processes Holliday junction (HJ) DNA during genetic recombination and DNA repair, while the RuvA-RuvB complex plays an important role in the rescue of blocked DNA replication forks via replication fork reversal (RFR). RuvA specifically binds to HJ cruciform DNA, conferring on it an open structure. The RuvB hexamer acts as an ATP-dependent pump, pulling dsDNA into and through the RuvAB complex. HJ branch migration allows RuvC to scan DNA until it finds its consensus sequence, where it cleaves and resolves the cruciform DNA. The chain is Holliday junction branch migration complex subunit RuvA from Methylobacterium radiotolerans (strain ATCC 27329 / DSM 1819 / JCM 2831 / NBRC 15690 / NCIMB 10815 / 0-1).